Consider the following 243-residue polypeptide: Adenine phosphoribosyltransferase 1, chloroplastic (243 aa).

The transit peptide at 1-52 directs the protein to the chloroplast; that stretch reads MQTIIISPLVSHRLCLARAVPCNRLLNNHHRAPPSIRLSNHRSTTSLRLFSS. Gln2 is subject to N-acetylalanine.

Belongs to the purine/pyrimidine phosphoribosyltransferase family. As to quaternary structure, homodimer.

The protein localises to the plastid. It localises to the chloroplast. The protein resides in the cytoplasm. The catalysed reaction is AMP + diphosphate = 5-phospho-alpha-D-ribose 1-diphosphate + adenine. Its pathway is purine metabolism; AMP biosynthesis via salvage pathway; AMP from adenine: step 1/1. Functionally, catalyzes a salvage reaction resulting in the formation of AMP, that is energically less costly than de novo synthesis. Contributes primarily to the recycling of adenine into adenylate nucleotides, but is also involved in the inactivation of cytokinins by phosphoribosylation. Catalyzes the conversion of cytokinins from free bases (active form) to the corresponding nucleotides (inactive form). In Arabidopsis thaliana (Mouse-ear cress), this protein is Adenine phosphoribosyltransferase 1, chloroplastic (APT1).